The following is a 419-amino-acid chain: Pygopus homolog 1 (419 aa).

Disordered stretches follow at residues 1 to 64 (MPAE…PNSD) and 175 to 338 (HFRQ…SSSD). Residues 18–30 (GDSGLDGLGGPGV) are compositionally biased toward gly residues. Residues 35–41 (PDKKKRK) carry the Nuclear localization signal motif. Composition is skewed to polar residues over residues 175-221 (HFRQ…SNHS) and 240-255 (DFTQ…NSSA). Over residues 276–286 (VNRNNAVNQEN) the composition is skewed to low complexity. A compositionally biased stretch (polar residues) spans 287–307 (SRSSSTEATNNNPANGTQNKP). The PHD-type zinc-finger motif lies at 340–398 (VYPCGICTNEVNDDQDAILCEASCQKWFHRICTGMTETAYGLLTAEASAVWGCDTCMAD). Residues 341–388 (YPCGICTNEVNDDQDAILCEASCQKWFHRICTGMTETAYGLLTAEASA) are interaction with H3K4me2. The segment at 373 to 391 (GMTETAYGLLTAEASAVWG) is interaction with BCL9.

In terms of assembly, interacts with BCL9 via The PHD-type zinc finger motiv, and thereby becomes part of the nuclear beta-catenin/TCF complex. Identified in a complex with BCL9L, CDC73, CTNNB1 and PYGO1. Interacts with histone H3 mono-, di- or tri-methylated at 'Lys4' (H3K4me1, H3K4me2, H3K4me3); the interaction is enhanced by the interaction with BCL9.

It is found in the nucleus. In terms of biological role, involved in signal transduction through the Wnt pathway. The protein is Pygopus homolog 1 (PYGO1) of Homo sapiens (Human).